The following is a 271-amino-acid chain: Phosphonoacetaldehyde hydrolase (271 aa).

Asp12 acts as the Nucleophile in catalysis. Mg(2+) contacts are provided by Asp12 and Ala14. The active-site Schiff-base intermediate with substrate is the Lys54. Asp188 is a binding site for Mg(2+).

Belongs to the HAD-like hydrolase superfamily. PhnX family. In terms of assembly, homodimer. Mg(2+) serves as cofactor.

It catalyses the reaction phosphonoacetaldehyde + H2O = acetaldehyde + phosphate + H(+). Involved in phosphonate degradation. The protein is Phosphonoacetaldehyde hydrolase of Vibrio vulnificus (strain CMCP6).